The sequence spans 313 residues: Ribosomal RNA small subunit methyltransferase H (313 aa).

Residues Gly-35 to His-37, Asp-55, Phe-79, Asp-101, and Gln-108 each bind S-adenosyl-L-methionine.

The protein belongs to the methyltransferase superfamily. RsmH family.

The protein localises to the cytoplasm. The enzyme catalyses cytidine(1402) in 16S rRNA + S-adenosyl-L-methionine = N(4)-methylcytidine(1402) in 16S rRNA + S-adenosyl-L-homocysteine + H(+). In terms of biological role, specifically methylates the N4 position of cytidine in position 1402 (C1402) of 16S rRNA. This chain is Ribosomal RNA small subunit methyltransferase H, found in Escherichia coli O6:H1 (strain CFT073 / ATCC 700928 / UPEC).